Reading from the N-terminus, the 518-residue chain is Zinc finger protein 449 (518 aa).

In terms of domain architecture, SCAN box spans 30–112 (RQRFRQFQYR…SLIEDLQREL (83 aa)). Residues 292 to 304 (NPTLGETPENSNL) are compositionally biased toward polar residues. Residues 292-325 (NPTLGETPENSNLEEPLNPKPHKKKSPGEKPHRC) are disordered. C2H2-type zinc fingers lie at residues 323–345 (HRCP…QRIH), 351–373 (HKCP…QRLH), 379–401 (YECT…QRTH), 407–429 (YKCL…LKTH), 435–457 (HRCH…QRTH), 463–485 (FKCN…LRIH), and 491–513 (YKCT…QVTH).

This sequence belongs to the krueppel C2H2-type zinc-finger protein family.

The protein localises to the nucleus. Its function is as follows. May be involved in transcriptional regulation. The protein is Zinc finger protein 449 (ZNF449) of Gorilla gorilla gorilla (Western lowland gorilla).